A 367-amino-acid chain; its full sequence is 2-aminoethylphosphonate--pyruvate transaminase (367 aa).

Position 193 is an N6-(pyridoxal phosphate)lysine (K193).

The protein belongs to the class-V pyridoxal-phosphate-dependent aminotransferase family. PhnW subfamily. In terms of assembly, homodimer. It depends on pyridoxal 5'-phosphate as a cofactor.

The catalysed reaction is (2-aminoethyl)phosphonate + pyruvate = phosphonoacetaldehyde + L-alanine. Its function is as follows. Involved in phosphonate degradation. This is 2-aminoethylphosphonate--pyruvate transaminase from Vibrio cholerae serotype O1 (strain ATCC 39541 / Classical Ogawa 395 / O395).